Consider the following 1049-residue polypeptide: MEKRLGVKPNPASWILSGYYWQTSAKWLRTLYLFYTCFCFSVLWLSTDASESRCQQGKTQFGVGLRSGGENHLWLLEGTPSLQSCWAACCQDSACHVFWWLEGMCIQADCSRPQSCRAFRTHSSNSMLMFLKKFQTADDLGFLPEDDVPHLLGLGWNWASWRQSPPRAALRPAVSSSDQQSLIRKLQKRGSPSEVVTPIVTQHSKVNDSNELGGLTTSGSAEVHKAITISSPLTTDLTAELPGGPKNVSAQPEIPEGLATTPSTQQVKSSEKTQIAVPQPVAPSYSYGTPTPQASFQSTSAPYPVIKELVVSAGDSVQITLPKNEVQLNAYVLQEPPKGETYTYDWQLITHPRDYSGEMEGKHSQILKLSKLTPGLYEFKVIVEGQNAHGEGYVNVTVKPEPRKNRPPIAIVSPQFQEISLPTTSTVIDGSQSTDDDKIVQYHWEELKGPLREEKISEDTAILKLSKLVPGNYTFSLTVVDSDGATNSTTANLTVNKAVDYPPVANAGPNQVITLPQNSITLFGNQSTDDHGITSYEWSLSPSSKGKVVEMQGVRTPTLQLSAMQEGDYTYQLTVTDTIGQQATAQVTVIVQPENNKPPQADAGPDKELTLPVDSTTLDGSKSSDDQKIISYLWEKTQGPDGVQLENANSSIATVTGLQVGTYVFTLTVKDERNLQSQSSVNVIVKEEINKPPIAKITGNVVITLPTSTAELDGSKSSDDKGIVSYLWTRDEGSPAAGEVLNHSDHHPILFLSNLVEGTYTFHLKVTDAKGESDTDRTTVEVKPDPRKNNLVEIILDINVSQLTERLKGMFIRQIGVLLGVLDSDIIVQKIQPYTEQSTKMVFFVQNEPPHQIFKGHEVAAMLKSELRKQKADFLIFRALEINTVTCQLNCSDHGHCDSFTKRCICDPFWMENFIKVQLRDGESNCEWSVLYVIIATFVIVVALGILSWTVICCCKRQKGKPKRKSKYKILDATDQESLELKPTSRTGIKQKGLVLSSSLMHSESELDSDDAIFTWPDREKGKLLHGQNGSVPNGQTPLKARSPREEIL.

The Cytoplasmic portion of the chain corresponds to 1–29 (MEKRLGVKPNPASWILSGYYWQTSAKWLR). Residues 30 to 50 (TLYLFYTCFCFSVLWLSTDAS) traverse the membrane as a helical segment. One can recognise an MANSC domain in the interval 49-127 (ASESRCQQGK…AFRTHSSNSM (79 aa)). The Extracellular segment spans residues 51–932 (ESRCQQGKTQ…ESNCEWSVLY (882 aa)). Positions 234–277 (TTDLTAELPGGPKNVSAQPEIPEGLATTPSTQQVKSSEKTQIAV) are disordered. N-linked (GlcNAc...) asparagine glycans are attached at residues Asn-247, Asn-395, and Asn-487. 5 PKD domains span residues 310-401 (VVSA…VKPE), 409-498 (IAIV…VNKA), 504-594 (VANA…VQPE), 600-688 (QADA…VKEE), and 694-785 (IAKI…VKPD). A helical transmembrane segment spans residues 933–953 (VIIATFVIVVALGILSWTVIC). Residues 954–1049 (CCKRQKGKPK…KARSPREEIL (96 aa)) are Cytoplasmic-facing. Thr-974 is modified (phosphothreonine). Phosphoserine is present on residues Ser-978, Ser-1009, and Ser-1031. Positions 1022 to 1049 (GKLLHGQNGSVPNGQTPLKARSPREEIL) are disordered. Over residues 1028–1037 (QNGSVPNGQT) the composition is skewed to polar residues. Phosphothreonine is present on Thr-1037.

As to quaternary structure, interacts with RTN4R. N-glycosylated.

It localises to the cytoplasmic granule membrane. The protein resides in the golgi apparatus membrane. The protein localises to the golgi apparatus. It is found in the trans-Golgi network membrane. Its subcellular location is the cell membrane. Possible role in axon guidance through interaction with RTN4R. This Pongo abelii (Sumatran orangutan) protein is Dyslexia-associated protein KIAA0319-like protein.